The primary structure comprises 441 residues: Tubulin beta chain, nucleomorph (441 aa).

GTP is bound by residues Q11, E69, S138, G142, T143, G144, N204, and N226. Residue E69 coordinates Mg(2+).

Belongs to the tubulin family. Dimer of alpha and beta chains. A typical microtubule is a hollow water-filled tube with an outer diameter of 25 nm and an inner diameter of 15 nM. Alpha-beta heterodimers associate head-to-tail to form protofilaments running lengthwise along the microtubule wall with the beta-tubulin subunit facing the microtubule plus end conferring a structural polarity. Microtubules usually have 13 protofilaments but different protofilament numbers can be found in some organisms and specialized cells. The cofactor is Mg(2+).

Functionally, tubulin is the major constituent of microtubules, a cylinder consisting of laterally associated linear protofilaments composed of alpha- and beta-tubulin heterodimers. Microtubules grow by the addition of GTP-tubulin dimers to the microtubule end, where a stabilizing cap forms. Below the cap, tubulin dimers are in GDP-bound state, owing to GTPase activity of alpha-tubulin. This Guillardia theta (Cryptophyte) protein is Tubulin beta chain, nucleomorph (tubB).